Consider the following 502-residue polypeptide: Regulator of hypoxia-inducible factor 1 (502 aa).

11 helical membrane-spanning segments follow: residues 54–74 (LLAW…VFSC), 92–112 (LDVL…NHTG), 138–158 (IFGA…VLSG), 188–208 (LAPS…NALL), 241–261 (MGYL…PIFL), 272–292 (MALT…YCTA), 335–355 (GPFL…YIMV), 367–387 (LIVA…PNAG), 396–416 (TAVF…ALYF), 437–457 (AYLL…LQAA), and 465–485 (LVLP…YLFI).

Expressed in intestine, some sensory neurons in the head, body wall muscles and socket cells.

It is found in the endoplasmic reticulum membrane. Involved in the response to variation in environmental oxygen levels by inhibiting hif-1-mediated gene transcription in a vhl-1-independent manner. Plays a role in susceptibility to killing mediated by P.aeruginosa and by pore-forming toxins produced by B.thuringiensis. Probably by preventing hif-1 transcriptional activity, regulates behavioral responses, such as locomotion speed following acute reoxygenation. Plays a role in normal egg-laying probably by regulating spermatogenesis and in body morphogenesis. In Caenorhabditis elegans, this protein is Regulator of hypoxia-inducible factor 1.